Consider the following 150-residue polypeptide: uncharacterized protein (150 aa).

This is an uncharacterized protein from Aquifex aeolicus (strain VF5).